The sequence spans 329 residues: MATRPQPLGMEPEGSADLLHGPEGARGQYGSTQKIEDLMDMVKKLQKVGSLEPRIEVLINRINEVQQAKKKASEELGEAQTVWDNLQKELDLLREEKVRLKDILNRKEETLRIMQLHCQEKESEAQRKHSMLQECKERISFLNSQIDKEKAKLRKLRLDFEEHLETLMSQHKDTLEFHKPEHLTKEMCVLDSSKEQLLKEEKLMKVKLEDVRQRLCALGGPEGSSSLIEGLFLRSHEAAAAMQMFKDENKKAEEFLEAAAQQHEQLQQRCHQLQQKRQRLKEELEKHGVQILAHSTQNEEDSSWRMASPKPVEVHEETAQDQERPSSRT.

The segment at 1 to 29 (MATRPQPLGMEPEGSADLLHGPEGARGQY) is disordered. 2 coiled-coil regions span residues 54-167 (RIEV…LETL) and 194-294 (KEQL…ILAH). The interval 291–329 (ILAHSTQNEEDSSWRMASPKPVEVHEETAQDQERPSSRT) is disordered. Positions 312–329 (VEVHEETAQDQERPSSRT) are enriched in basic and acidic residues.

It belongs to the SYCE family. In terms of assembly, homodimer. Found in a complex with SYCP1 and SYCE2. Interacts with SYCP1, SYCE2 and SYCE3. Interacts with SIX6OS1. As to expression, meiotic cells (at protein level). Expressed in the ovary and testis.

It localises to the nucleus. The protein resides in the chromosome. Its function is as follows. Major component of the transverse central element of synaptonemal complexes (SCS), formed between homologous chromosomes during meiotic prophase. Requires SYCP1 in order to be incorporated into the central element. May have a role in the synaptonemal complex assembly, stabilization and recombination. The chain is Synaptonemal complex central element protein 1 (Syce1) from Mus musculus (Mouse).